The chain runs to 292 residues: Protease HtpX (292 aa).

The next 2 helical transmembrane spans lie at 4–24 (IVLF…ILFL) and 32–52 (IYGL…LSLI). Zn(2+) is bound at residue H139. The active site involves E140. H143 is a Zn(2+) binding site. The next 2 membrane-spanning stretches (helical) occupy residues 147–167 (GDMI…IFIS) and 193–213 (FVYF…ASII). A Zn(2+)-binding site is contributed by E222.

It belongs to the peptidase M48B family. Zn(2+) serves as cofactor.

It is found in the cell membrane. This Buchnera aphidicola subsp. Acyrthosiphon pisum (strain 5A) protein is Protease HtpX.